We begin with the raw amino-acid sequence, 139 residues long: Nucleoside diphosphate kinase (139 aa).

Residues K11, F59, R87, T93, R104, and N114 each contribute to the ATP site. H117 (pros-phosphohistidine intermediate) is an active-site residue.

It belongs to the NDK family. Homotetramer. The cofactor is Mg(2+).

It localises to the cytoplasm. It catalyses the reaction a 2'-deoxyribonucleoside 5'-diphosphate + ATP = a 2'-deoxyribonucleoside 5'-triphosphate + ADP. The enzyme catalyses a ribonucleoside 5'-diphosphate + ATP = a ribonucleoside 5'-triphosphate + ADP. Major role in the synthesis of nucleoside triphosphates other than ATP. The ATP gamma phosphate is transferred to the NDP beta phosphate via a ping-pong mechanism, using a phosphorylated active-site intermediate. The chain is Nucleoside diphosphate kinase from Coxiella burnetii (strain CbuK_Q154) (Coxiella burnetii (strain Q154)).